Reading from the N-terminus, the 633-residue chain is DEAD-box ATP-dependent RNA helicase 27 (633 aa).

Over residues methionine 1–lysine 17 the composition is skewed to basic and acidic residues. Residues methionine 1–glutamate 147 are disordered. Residues alanine 2–glutamine 34 are a coiled coil. Acidic residues-rich tracts occupy residues methionine 37–aspartate 47 and aspartate 74–glutamate 83. Residues lysine 88 to glutamine 97 show a composition bias toward basic residues. Composition is skewed to acidic residues over residues asparagine 103 to glutamate 114 and serine 131 to glutamate 140. Residues lysine 117 to asparagine 153 are a coiled coil. A Q motif motif is present at residues lysine 154–alanine 182. In terms of domain architecture, Helicase ATP-binding spans isoleucine 185 to isoleucine 360. Alanine 198–threonine 205 is an ATP binding site. The DEAD box signature appears at aspartate 308–aspartate 311. The region spanning arginine 386 to leucine 534 is the Helicase C-terminal domain. The tract at residues lysine 608–tyrosine 633 is disordered.

The protein belongs to the DEAD box helicase family. DDX18/HAS1 subfamily.

The enzyme catalyses ATP + H2O = ADP + phosphate + H(+). This is DEAD-box ATP-dependent RNA helicase 27 (RH27) from Arabidopsis thaliana (Mouse-ear cress).